A 473-amino-acid chain; its full sequence is Ras-GEF domain-containing family member 1B (473 aa).

In terms of domain architecture, N-terminal Ras-GEF spans 34 to 164; it reads HDNNLLSGSL…QMMQCLIRKL (131 aa). The region spanning 204–452 is the Ras-GEF domain; it reads NDPYTLAQQL…LYLASYESEG (249 aa).

In terms of assembly, interacts with Ras family proteins. Interacts with CCDC124 during cytokinesis.

The protein localises to the early endosome. It localises to the late endosome. Its subcellular location is the midbody. Guanine nucleotide exchange factor (GEF) with specificity for RAP2A, it doesn't seems to activate other Ras family proteins (in vitro). This Homo sapiens (Human) protein is Ras-GEF domain-containing family member 1B (RASGEF1B).